A 287-amino-acid polypeptide reads, in one-letter code: Energy-coupling factor transporter ATP-binding protein EcfA2 (287 aa).

An ABC transporter domain is found at 3-246 (VKFSQVSYVY…TNYVNQLHLD (244 aa)). 40–47 (GQTGSGKS) is an ATP binding site.

Belongs to the ABC transporter superfamily. Energy-coupling factor EcfA family. In terms of assembly, forms a stable energy-coupling factor (ECF) transporter complex composed of 2 membrane-embedded substrate-binding proteins (S component), 2 ATP-binding proteins (A component) and 2 transmembrane proteins (T component).

It is found in the cell membrane. Its function is as follows. ATP-binding (A) component of a common energy-coupling factor (ECF) ABC-transporter complex. Unlike classic ABC transporters this ECF transporter provides the energy necessary to transport a number of different substrates. The chain is Energy-coupling factor transporter ATP-binding protein EcfA2 from Staphylococcus saprophyticus subsp. saprophyticus (strain ATCC 15305 / DSM 20229 / NCIMB 8711 / NCTC 7292 / S-41).